The sequence spans 549 residues: S-methyl thiourocanate hydratase (549 aa).

Residues Met-49, Gly-173, Met-174, Gly-175, Asp-193, Ser-198, Asn-239, Ala-240, Gln-260, Val-270, and Tyr-318 each contribute to the NAD(+) site.

It belongs to the urocanase family. S-methyl thiourocanate hydratase subfamily. It depends on NAD(+) as a cofactor.

The enzyme catalyses S-methyl-(E)-thiourocanate + H2O = S-methyl-thiohydantoin-5-propanoate. Its function is as follows. Hydratase involved in the catabolism of S-methyl ergothioneine. Catalyzes the 1,4-addition of H(2)O to S-methyl thiourocanate, leading to the formation of S-methyl-thiohydantoin-5-propanoate, the second step in S-methyl ergothioneine degradation. Cannot use urocanate or thiourocanate as substrate. This chain is S-methyl thiourocanate hydratase, found in Variovorax sp. (strain JCM 16519 / RA8).